Consider the following 461-residue polypeptide: Argininosuccinate lyase (461 aa).

The protein belongs to the lyase 1 family. Argininosuccinate lyase subfamily.

Its subcellular location is the cytoplasm. The enzyme catalyses 2-(N(omega)-L-arginino)succinate = fumarate + L-arginine. The protein operates within amino-acid biosynthesis; L-arginine biosynthesis; L-arginine from L-ornithine and carbamoyl phosphate: step 3/3. The protein is Argininosuccinate lyase of Clostridium beijerinckii (strain ATCC 51743 / NCIMB 8052) (Clostridium acetobutylicum).